The following is a 198-amino-acid chain: Adenine phosphoribosyltransferase (198 aa).

The protein belongs to the purine/pyrimidine phosphoribosyltransferase family. In terms of assembly, homodimer.

Its subcellular location is the cytoplasm. It carries out the reaction AMP + diphosphate = 5-phospho-alpha-D-ribose 1-diphosphate + adenine. The protein operates within purine metabolism; AMP biosynthesis via salvage pathway; AMP from adenine: step 1/1. Functionally, catalyzes a salvage reaction resulting in the formation of AMP, that is energically less costly than de novo synthesis. The sequence is that of Adenine phosphoribosyltransferase from Serratia proteamaculans (strain 568).